A 268-amino-acid chain; its full sequence is Fibroblast growth factor 8 (268 aa).

Residues 1 to 22 (MGSPRSALSCLLLHLLVLCLQA) form the signal peptide. Q23 bears the Pyrrolidone carboxylic acid mark. Residues 29–87 (QKRGPGAGNPADTLGQGHEDRPFGQRSRAGKNFTNPAPNYPEEGSKEQRDSVLPKVTQR) form a disordered region. N-linked (GlcNAc...) asparagine glycosylation occurs at N60. Basic and acidic residues predominate over residues 71–80 (EGSKEQRDSV). Residue N190 is glycosylated (N-linked (GlcNAc...) asparagine).

This sequence belongs to the heparin-binding growth factors family. In terms of assembly, monomer. Homodimer. Interacts with FGFR1, FGFR2, FGFR3 and FGFR4. Affinity between fibroblast growth factors (FGFs) and their receptors is increased by heparan sulfate glycosaminoglycans that function as coreceptors. In terms of processing, the N-terminus is blocked. In terms of tissue distribution, absent in normal mammary glands and detected only in adult testis and ovary and in midgestational embryos.

It is found in the secreted. Plays an important role in the regulation of embryonic development, cell proliferation, cell differentiation and cell migration. Required for normal brain, eye, ear and limb development during embryogenesis. Required for normal development of the gonadotropin-releasing hormone (GnRH) neuronal system. Plays a role in neurite outgrowth in hippocampal cells. Cooperates with Wnt-1 in mouse mammary tumor virus-induced murine mammary tumorigenesis. The polypeptide is Fibroblast growth factor 8 (Fgf8) (Mus musculus (Mouse)).